Consider the following 245-residue polypeptide: 1-(5-phosphoribosyl)-5-[(5-phosphoribosylamino)methylideneamino] imidazole-4-carboxamide isomerase (245 aa).

Residue Asp-7 is the Proton acceptor of the active site. The active-site Proton donor is the Asp-129.

The protein belongs to the HisA/HisF family.

The protein localises to the cytoplasm. The enzyme catalyses 1-(5-phospho-beta-D-ribosyl)-5-[(5-phospho-beta-D-ribosylamino)methylideneamino]imidazole-4-carboxamide = 5-[(5-phospho-1-deoxy-D-ribulos-1-ylimino)methylamino]-1-(5-phospho-beta-D-ribosyl)imidazole-4-carboxamide. Its pathway is amino-acid biosynthesis; L-histidine biosynthesis; L-histidine from 5-phospho-alpha-D-ribose 1-diphosphate: step 4/9. This is 1-(5-phosphoribosyl)-5-[(5-phosphoribosylamino)methylideneamino] imidazole-4-carboxamide isomerase from Shewanella amazonensis (strain ATCC BAA-1098 / SB2B).